The following is a 1082-amino-acid chain: SURP and G-patch domain-containing protein 2 (1082 aa).

The residue at position 7 (Thr-7) is a Phosphothreonine. The segment at 65–97 is disordered; sequence LSGSVAHSRDAGREGLRSDVFPGPSFRSSNPSI. The segment covering 71-81 has biased composition (basic and acidic residues); sequence HSRDAGREGLR. A phosphoserine mark is found at Ser-96 and Ser-224. Lys-228 participates in a covalent cross-link: Glycyl lysine isopeptide (Lys-Gly) (interchain with G-Cter in SUMO2). A Phosphothreonine modification is found at Thr-275. Position 277 is a phosphoserine (Ser-277). Lys-305 is covalently cross-linked (Glycyl lysine isopeptide (Lys-Gly) (interchain with G-Cter in SUMO2)). A phosphoserine mark is found at Ser-315, Ser-573, and Ser-603. One copy of the SURP motif 1 repeat lies at 590-633; sequence IDQLVKRVIEGSLSPKERTLLKEDPAYWFLSDENSLEYKYYKLK. Lys-650 is covalently cross-linked (Glycyl lysine isopeptide (Lys-Gly) (interchain with G-Cter in SUMO2)). The disordered stretch occupies residues 694–779; it reads RRATTGTQTL…QTSSPCPSAD (86 aa). Residues 697–708 are compositionally biased toward low complexity; sequence TTGTQTLLSSGT. Positions 727–738 are enriched in basic and acidic residues; that stretch reads LPDRNDAAKDCP. A phosphoserine mark is found at Ser-754 and Ser-757. Residues 787–830 form an SURP motif 2 repeat; sequence TAEKLARFVAQVGPEIEQFSIENSTDNPDLWFLHDQNSSAFKFY. 3 disordered regions span residues 849–930, 982–1002, and 1030–1061; these read NLHT…EAAE, RIAY…PKDL, and LGSL…EHKE. Ser-863 carries the post-translational modification Phosphoserine. 2 stretches are compositionally biased toward acidic residues: residues 868–877 and 885–904; these read MEGEAEFEDE and LESP…DGGE. The span at 990–999 shows a compositional bias: basic residues; it reads GRPMSKKKKP. The short motif at 995 to 1000 is the Nuclear localization signal element; sequence KKKKPK. The region spanning 1011–1057 is the G-patch domain; the sequence is DKNLGFQMLQKMGWKEGHGLGSLGKGIREPVSVGTPSEGEGLGADGQ.

As to expression, detected in adult testis, and in fetal brain and kidney.

The protein resides in the nucleus. In terms of biological role, may play a role in mRNA splicing. This is SURP and G-patch domain-containing protein 2 (SUGP2) from Homo sapiens (Human).